Here is a 239-residue protein sequence, read N- to C-terminus: C-8 sterol isomerase erg2 (239 aa).

N11 carries an N-linked (GlcNAc...) asparagine glycan. Residues 27–47 (KFGFLAVFVAIFAALYSYLDA) traverse the membrane as a helical segment. N73 is a glycosylation site (N-linked (GlcNAc...) asparagine).

This sequence belongs to the ERG2 family.

Its subcellular location is the endoplasmic reticulum membrane. It carries out the reaction fecosterol = episterol. Its pathway is steroid metabolism; ergosterol biosynthesis. In terms of biological role, C-8 sterol isomerase; part of the third module of ergosterol biosynthesis pathway that includes the late steps of the pathway. Erg2 catalyzes the reaction which results in unsaturation at C-7 in the B ring of sterols and thus converts fecosterol to episterol. The third module or late pathway involves the ergosterol synthesis itself through consecutive reactions that mainly occur in the endoplasmic reticulum (ER) membrane. Firstly, the squalene synthase erg9 catalyzes the condensation of 2 farnesyl pyrophosphate moieties to form squalene, which is the precursor of all steroids. Squalene synthase is crucial for balancing the incorporation of farnesyl diphosphate (FPP) into sterol and nonsterol isoprene synthesis. Secondly, squalene is converted into lanosterol by the consecutive action of the squalene epoxidase erg1 and the lanosterol synthase erg7. Then, the delta(24)-sterol C-methyltransferase erg6 methylates lanosterol at C-24 to produce eburicol. Eburicol is the substrate of the sterol 14-alpha demethylase encoded by cyp51A and cyp51B, to yield 4,4,24-trimethyl ergosta-8,14,24(28)-trienol. The C-14 reductase erg24 then reduces the C14=C15 double bond which leads to 4,4-dimethylfecosterol. A sequence of further demethylations at C-4, involving the C-4 demethylation complex containing the C-4 methylsterol oxidases erg25A or erg25B, the sterol-4-alpha-carboxylate 3-dehydrogenase erg26 and the 3-keto-steroid reductase erg27, leads to the production of fecosterol via 4-methylfecosterol. The C-8 sterol isomerase erg2 then catalyzes the reaction which results in unsaturation at C-7 in the B ring of sterols and thus converts fecosterol to episterol. The sterol-C5-desaturase erg3B then catalyzes the introduction of a C-5 double bond in the B ring to produce 5-dehydroepisterol. The 2 other sterol-C5-desaturases, erg3A and erg3C, seem to be less important in ergosterol biosynthesis. The C-22 sterol desaturase erg5 further converts 5-dehydroepisterol into ergosta-5,7,22,24(28)-tetraen-3beta-ol by forming the C-22(23) double bond in the sterol side chain. Finally, ergosta-5,7,22,24(28)-tetraen-3beta-ol is substrate of the C-24(28) sterol reductases erg4A and erg4B to produce ergosterol. Possible alternative sterol biosynthetic pathways might exist from fecosterol to ergosterol, depending on the activities of the erg3 isoforms. This chain is C-8 sterol isomerase erg2, found in Aspergillus fumigatus (strain ATCC MYA-4609 / CBS 101355 / FGSC A1100 / Af293) (Neosartorya fumigata).